Here is a 510-residue protein sequence, read N- to C-terminus: Maturase K (510 aa).

It belongs to the intron maturase 2 family. MatK subfamily.

Its subcellular location is the plastid. It is found in the chloroplast. In terms of biological role, usually encoded in the trnK tRNA gene intron. Probably assists in splicing its own and other chloroplast group II introns. The polypeptide is Maturase K (Grahamia bracteata).